The sequence spans 228 residues: Translation initiation factor 6 (228 aa).

It belongs to the eIF-6 family.

Its function is as follows. Binds to the 50S ribosomal subunit and prevents its association with the 30S ribosomal subunit to form the 70S initiation complex. In Thermococcus gammatolerans (strain DSM 15229 / JCM 11827 / EJ3), this protein is Translation initiation factor 6.